The primary structure comprises 156 residues: D-aminoacyl-tRNA deacylase (156 aa).

The Gly-cisPro motif, important for rejection of L-amino acids signature appears at 137–138; that stretch reads GP.

It belongs to the DTD family. Homodimer.

It is found in the cytoplasm. It catalyses the reaction glycyl-tRNA(Ala) + H2O = tRNA(Ala) + glycine + H(+). It carries out the reaction a D-aminoacyl-tRNA + H2O = a tRNA + a D-alpha-amino acid + H(+). An aminoacyl-tRNA editing enzyme that deacylates mischarged D-aminoacyl-tRNAs. Also deacylates mischarged glycyl-tRNA(Ala), protecting cells against glycine mischarging by AlaRS. Acts via tRNA-based rather than protein-based catalysis; rejects L-amino acids rather than detecting D-amino acids in the active site. By recycling D-aminoacyl-tRNA to D-amino acids and free tRNA molecules, this enzyme counteracts the toxicity associated with the formation of D-aminoacyl-tRNA entities in vivo and helps enforce protein L-homochirality. The protein is D-aminoacyl-tRNA deacylase of Dictyoglomus turgidum (strain DSM 6724 / Z-1310).